Reading from the N-terminus, the 376-residue chain is Glutamate 5-kinase (376 aa).

Residue lysine 18 participates in ATP binding. Substrate-binding residues include serine 58, aspartate 145, and asparagine 157. Residues 177–178 (SD) and 218–224 (TGGMASK) each bind ATP. Residues 280–358 (TGALTLDAGA…SELPGELRRP (79 aa)) enclose the PUA domain.

This sequence belongs to the glutamate 5-kinase family.

It localises to the cytoplasm. The catalysed reaction is L-glutamate + ATP = L-glutamyl 5-phosphate + ADP. It participates in amino-acid biosynthesis; L-proline biosynthesis; L-glutamate 5-semialdehyde from L-glutamate: step 1/2. Its function is as follows. Catalyzes the transfer of a phosphate group to glutamate to form L-glutamate 5-phosphate. This is Glutamate 5-kinase from Mycobacterium tuberculosis (strain ATCC 25177 / H37Ra).